Here is a 112-residue protein sequence, read N- to C-terminus: FK506-binding protein 1A (112 aa).

In terms of domain architecture, PPIase FKBP-type spans 20 to 108; the sequence is GDFVTIHYTG…IFEVELLGIN (89 aa).

This sequence belongs to the FKBP-type PPIase family. FKBP1 subfamily.

The protein localises to the cytoplasm. The enzyme catalyses [protein]-peptidylproline (omega=180) = [protein]-peptidylproline (omega=0). Its activity is regulated as follows. Inhibited by both FK506 and rapamycin. Its function is as follows. PPIases accelerate the folding of proteins. It catalyzes the cis-trans isomerization of proline imidic peptide bonds in oligopeptides. This chain is FK506-binding protein 1A (fpr1A), found in Aspergillus fumigatus (strain ATCC MYA-4609 / CBS 101355 / FGSC A1100 / Af293) (Neosartorya fumigata).